A 204-amino-acid polypeptide reads, in one-letter code: Imidazole glycerol phosphate synthase subunit HisH (204 aa).

The Glutamine amidotransferase type-1 domain occupies 1-204; it reads MIKIVDYGLG…MTLLKNFSEI (204 aa). The active-site Nucleophile is cysteine 80. Residues histidine 186 and glutamate 188 contribute to the active site.

Heterodimer of HisH and HisF.

It localises to the cytoplasm. It catalyses the reaction 5-[(5-phospho-1-deoxy-D-ribulos-1-ylimino)methylamino]-1-(5-phospho-beta-D-ribosyl)imidazole-4-carboxamide + L-glutamine = D-erythro-1-(imidazol-4-yl)glycerol 3-phosphate + 5-amino-1-(5-phospho-beta-D-ribosyl)imidazole-4-carboxamide + L-glutamate + H(+). The enzyme catalyses L-glutamine + H2O = L-glutamate + NH4(+). Its pathway is amino-acid biosynthesis; L-histidine biosynthesis; L-histidine from 5-phospho-alpha-D-ribose 1-diphosphate: step 5/9. Functionally, IGPS catalyzes the conversion of PRFAR and glutamine to IGP, AICAR and glutamate. The HisH subunit catalyzes the hydrolysis of glutamine to glutamate and ammonia as part of the synthesis of IGP and AICAR. The resulting ammonia molecule is channeled to the active site of HisF. This is Imidazole glycerol phosphate synthase subunit HisH from Bdellovibrio bacteriovorus (strain ATCC 15356 / DSM 50701 / NCIMB 9529 / HD100).